The following is a 258-amino-acid chain: Ditrans,polycis-undecaprenyl-diphosphate synthase ((2E,6E)-farnesyl-diphosphate specific) (258 aa).

Residue D24 is part of the active site. D24 lines the Mg(2+) pocket. Residues 25 to 28 (GNGR), W29, R37, H41, and 69 to 71 (SSE) each bind substrate. The active-site Proton acceptor is the N72. Residues W73, R75, R192, and 198 to 200 (RIS) contribute to the substrate site. E211 contacts Mg(2+).

It belongs to the UPP synthase family. Homodimer. Requires Mg(2+) as cofactor.

The enzyme catalyses 8 isopentenyl diphosphate + (2E,6E)-farnesyl diphosphate = di-trans,octa-cis-undecaprenyl diphosphate + 8 diphosphate. Its function is as follows. Catalyzes the sequential condensation of isopentenyl diphosphate (IPP) with (2E,6E)-farnesyl diphosphate (E,E-FPP) to yield (2Z,6Z,10Z,14Z,18Z,22Z,26Z,30Z,34E,38E)-undecaprenyl diphosphate (di-trans,octa-cis-UPP). UPP is the precursor of glycosyl carrier lipid in the biosynthesis of bacterial cell wall polysaccharide components such as peptidoglycan and lipopolysaccharide. In Xanthomonas oryzae pv. oryzae (strain KACC10331 / KXO85), this protein is Ditrans,polycis-undecaprenyl-diphosphate synthase ((2E,6E)-farnesyl-diphosphate specific).